Here is a 178-residue protein sequence, read N- to C-terminus: ATP synthase subunit d, mitochondrial (178 aa).

The segment at 149–178 (NKPTFWPHTPEEQVGYKSKEQLEAEAQGHH) is disordered. Positions 165–178 (KSKEQLEAEAQGHH) are enriched in basic and acidic residues.

It belongs to the ATPase d subunit family. F-type ATPases have 2 components, CF(1) - the catalytic core - and CF(0) - the membrane proton channel. CF(0) seems to have nine subunits: a, b, c, d, e, f, g, F6 and 8 (or A6L).

Its subcellular location is the mitochondrion. It localises to the mitochondrion inner membrane. Functionally, mitochondrial membrane ATP synthase (F(1)F(0) ATP synthase or Complex V) produces ATP from ADP in the presence of a proton gradient across the membrane which is generated by electron transport complexes of the respiratory chain. F-type ATPases consist of two structural domains, F(1) - containing the extramembraneous catalytic core, and F(0) - containing the membrane proton channel, linked together by a central stalk and a peripheral stalk. During catalysis, ATP synthesis in the catalytic domain of F(1) is coupled via a rotary mechanism of the central stalk subunits to proton translocation. Part of the complex F(0) domain and the peripheric stalk, which acts as a stator to hold the catalytic alpha(3)beta(3) subcomplex and subunit a/ATP6 static relative to the rotary elements. This chain is ATP synthase subunit d, mitochondrial, found in Drosophila melanogaster (Fruit fly).